The chain runs to 125 residues: Phosphoribosyl-AMP cyclohydrolase (125 aa).

Aspartate 80 lines the Mg(2+) pocket. Cysteine 81 contacts Zn(2+). Residues aspartate 82 and aspartate 84 each coordinate Mg(2+). Residues cysteine 97 and cysteine 104 each contribute to the Zn(2+) site.

This sequence belongs to the PRA-CH family. In terms of assembly, homodimer. Requires Mg(2+) as cofactor. The cofactor is Zn(2+).

It localises to the cytoplasm. The enzyme catalyses 1-(5-phospho-beta-D-ribosyl)-5'-AMP + H2O = 1-(5-phospho-beta-D-ribosyl)-5-[(5-phospho-beta-D-ribosylamino)methylideneamino]imidazole-4-carboxamide. The protein operates within amino-acid biosynthesis; L-histidine biosynthesis; L-histidine from 5-phospho-alpha-D-ribose 1-diphosphate: step 3/9. Functionally, catalyzes the hydrolysis of the adenine ring of phosphoribosyl-AMP. The polypeptide is Phosphoribosyl-AMP cyclohydrolase (Leifsonia xyli subsp. xyli (strain CTCB07)).